The primary structure comprises 116 residues: NADPH-dependent 7-cyano-7-deazaguanine reductase (116 aa).

Cys31 (thioimide intermediate) is an active-site residue. Residue Asp38 is the Proton donor of the active site. Substrate is bound by residues 53-55 (IEL) and 72-73 (YE).

Belongs to the GTP cyclohydrolase I family. QueF type 1 subfamily.

It is found in the cytoplasm. It carries out the reaction 7-aminomethyl-7-carbaguanine + 2 NADP(+) = 7-cyano-7-deazaguanine + 2 NADPH + 3 H(+). The protein operates within tRNA modification; tRNA-queuosine biosynthesis. Functionally, catalyzes the NADPH-dependent reduction of 7-cyano-7-deazaguanine (preQ0) to 7-aminomethyl-7-deazaguanine (preQ1). This chain is NADPH-dependent 7-cyano-7-deazaguanine reductase, found in Chlorobium luteolum (strain DSM 273 / BCRC 81028 / 2530) (Pelodictyon luteolum).